The following is a 68-amino-acid chain: Beta-defensin 1 (68 aa).

An N-terminal signal peptide occupies residues M1 to G21. The propeptide occupies G22 to S32. 3 disulfides stabilise this stretch: C37-C66, C44-C59, and C49-C67.

The protein belongs to the beta-defensin family. As to quaternary structure, monomer. Homodimer.

The protein resides in the secreted. The protein localises to the membrane. In terms of biological role, has bactericidal activity. May act as a ligand for C-C chemokine receptor CCR6. Positively regulates the sperm motility and bactericidal activity in a CCR6-dependent manner. Binds to CCR6 and triggers Ca2+ mobilization in the sperm which is important for its motility. This Gorilla gorilla gorilla (Western lowland gorilla) protein is Beta-defensin 1 (DEFB1).